The sequence spans 158 residues: 6,7-dimethyl-8-ribityllumazine synthase (158 aa).

Residues Phe-22, 57–59, and 81–83 contribute to the 5-amino-6-(D-ribitylamino)uracil site; these read AVE and AVI. Residue 86 to 87 participates in (2S)-2-hydroxy-3-oxobutyl phosphate binding; it reads GT. Residue His-89 is the Proton donor of the active site. Phe-114 is a binding site for 5-amino-6-(D-ribitylamino)uracil. Arg-128 provides a ligand contact to (2S)-2-hydroxy-3-oxobutyl phosphate.

It belongs to the DMRL synthase family. Forms an icosahedral capsid composed of 60 subunits, arranged as a dodecamer of pentamers.

The enzyme catalyses (2S)-2-hydroxy-3-oxobutyl phosphate + 5-amino-6-(D-ribitylamino)uracil = 6,7-dimethyl-8-(1-D-ribityl)lumazine + phosphate + 2 H2O + H(+). It functions in the pathway cofactor biosynthesis; riboflavin biosynthesis; riboflavin from 2-hydroxy-3-oxobutyl phosphate and 5-amino-6-(D-ribitylamino)uracil: step 1/2. Catalyzes the formation of 6,7-dimethyl-8-ribityllumazine by condensation of 5-amino-6-(D-ribitylamino)uracil with 3,4-dihydroxy-2-butanone 4-phosphate. This is the penultimate step in the biosynthesis of riboflavin. This is 6,7-dimethyl-8-ribityllumazine synthase from Shewanella oneidensis (strain ATCC 700550 / JCM 31522 / CIP 106686 / LMG 19005 / NCIMB 14063 / MR-1).